A 362-amino-acid polypeptide reads, in one-letter code: GTPase Obg (362 aa).

The Obg domain occupies 1–159 (MKFIDEARIE…RKLKLELKVL (159 aa)). The interval 129-148 (HFKSSTNRAPRQKTNGKEGE) is disordered. A compositionally biased stretch (polar residues) spans 130–141 (FKSSTNRAPRQK). Residues 160–334 (ADVGLLGMPN…LCYALQDYLD (175 aa)) form the OBG-type G domain. GTP is bound by residues 166 to 173 (GMPNAGKS), 191 to 195 (FTTLH), 213 to 216 (DIPG), 284 to 287 (NKVD), and 315 to 317 (SAL). Serine 173 and threonine 193 together coordinate Mg(2+). Positions 340–362 (RDDAEERAADPRYQDQAADKSPD) are disordered.

This sequence belongs to the TRAFAC class OBG-HflX-like GTPase superfamily. OBG GTPase family. In terms of assembly, monomer. It depends on Mg(2+) as a cofactor.

It is found in the cytoplasm. An essential GTPase which binds GTP, GDP and possibly (p)ppGpp with moderate affinity, with high nucleotide exchange rates and a fairly low GTP hydrolysis rate. Plays a role in control of the cell cycle, stress response, ribosome biogenesis and in those bacteria that undergo differentiation, in morphogenesis control. This is GTPase Obg from Polynucleobacter asymbioticus (strain DSM 18221 / CIP 109841 / QLW-P1DMWA-1) (Polynucleobacter necessarius subsp. asymbioticus).